Reading from the N-terminus, the 1305-residue chain is Contactin-associated protein like 5-1 (1305 aa).

An N-terminal signal peptide occupies residues 1–24; sequence MDSLQRLNGLLTLVLSALWHLGLT. The F5/8 type C domain maps to 25 to 174; sequence ASNYNCDDPL…IGMRVEAYGC (150 aa). Laminin G-like domains follow at residues 180 to 360 and 367 to 544; these read VADF…TFSC and PITF…IDLC. N-linked (GlcNAc...) asparagine glycosylation occurs at asparagine 282. The cysteines at positions 329 and 360 are disulfide-linked. Asparagine 496 is a glycosylation site (N-linked (GlcNAc...) asparagine). Cystine bridges form between cysteine 512–cysteine 544, cysteine 550–cysteine 561, and cysteine 555–cysteine 570. Residues 546–583 form the EGF-like 1 domain; it reads IKDRCLPNYCEHGGHCAQTWTTFYCNCSDTGYTGATCH. N-linked (GlcNAc...) asparagine glycosylation occurs at asparagine 571. An intrachain disulfide couples cysteine 572 to cysteine 582. Residues 584 to 790 enclose the Fibrinogen C-terminal domain; the sequence is DSIYEQSCEV…LRCNGDRHFW (207 aa). Asparagine 622 is a glycosylation site (N-linked (GlcNAc...) asparagine). A Laminin G-like 3 domain is found at 791 to 956; that stretch reads NAVSFSTEAS…KLMSGVTPGC (166 aa). Intrachain disulfides connect cysteine 929–cysteine 956, cysteine 960–cysteine 973, cysteine 967–cysteine 982, and cysteine 984–cysteine 994. The 39-residue stretch at 957–995 folds into the EGF-like 2 domain; it reads PGHCSSYSSNCHNGGKCVEKQSGYSCDCTNSPNEGPFCQ. The Laminin G-like 4 domain maps to 1014–1198; that stretch reads EPYLVIKNTS…VHGTLTESGC (185 aa). An N-linked (GlcNAc...) asparagine glycan is attached at asparagine 1057. Cysteine 1163 and cysteine 1198 are joined by a disulfide. A helical transmembrane segment spans residues 1238 to 1258; that stretch reads VIGGIIAVVTFVTFCVIGIMI.

The protein belongs to the neurexin family.

Its subcellular location is the membrane. Its function is as follows. May play a role in the correct development and proper functioning of the peripheral and central nervous system and be involved in cell adhesion and intercellular communication. This is Contactin-associated protein like 5-1 (Cntnap5a) from Rattus norvegicus (Rat).